The following is a 466-amino-acid chain: Cysteine--tRNA ligase (466 aa).

Cysteine 28 contributes to the Zn(2+) binding site. A 'HIGH' region motif is present at residues 30-40 (PTVYNYIHIGN). 3 residues coordinate Zn(2+): cysteine 208, histidine 233, and glutamate 237. A 'KMSKS' region motif is present at residues 265-269 (KMSKS). Lysine 268 is an ATP binding site.

This sequence belongs to the class-I aminoacyl-tRNA synthetase family. Monomer. Zn(2+) is required as a cofactor.

It localises to the cytoplasm. It carries out the reaction tRNA(Cys) + L-cysteine + ATP = L-cysteinyl-tRNA(Cys) + AMP + diphosphate. The polypeptide is Cysteine--tRNA ligase (Staphylococcus carnosus (strain TM300)).